The chain runs to 261 residues: Protein FAM216A (261 aa).

The tract at residues 1 to 52 (MPSRCPGVAGPPALARTEGSEGSAGQSYHQNSKGTGEQHKAERIKEGHRMSS) is disordered. Positions 23 to 35 (SAGQSYHQNSKGT) are enriched in polar residues. Over residues 36-49 (GEQHKAERIKEGHR) the composition is skewed to basic and acidic residues.

It belongs to the FAM216 family.

The protein is Protein FAM216A (Fam216a) of Rattus norvegicus (Rat).